We begin with the raw amino-acid sequence, 920 residues long: Plasma membrane ATPase (920 aa).

Residues 1–77 are disordered; that stretch reads MADHSASGAP…TPGGGRVVPE (77 aa). The Cytoplasmic segment spans residues 1 to 115; it reads MADHSASGAP…KEEKENHFLK (115 aa). Acidic residues predominate over residues 38–51; the sequence is EDDEDEDIDALIED. A helical membrane pass occupies residues 116-138; the sequence is FLGFFVGPIQFVMEGAAVLAAGL. The Extracellular portion of the chain corresponds to 139–140; the sequence is ED. A helical membrane pass occupies residues 141 to 160; that stretch reads WVDFGVICGLLLLNAVVGFV. At 161-291 the chain is on the cytoplasmic side; sequence QEFQAGSIVD…GSGHFTEVLN (131 aa). The helical transmembrane segment at 292–314 threads the bilayer; the sequence is GIGTILLILVIFTLLIVWVSSFY. The Extracellular segment spans residues 315-321; that stretch reads RSNPIVQ. The chain crosses the membrane as a helical span at residues 322-354; sequence ILEFTLAITIIGVPVGLPAVVTTTMAVGAAYLA. Topologically, residues 355 to 687 are cytoplasmic; it reads KKKAIVQKLS…LKTSRQIFHR (333 aa). The 4-aspartylphosphate intermediate role is filled by Asp378. Residues Asp634 and Asp638 each coordinate Mg(2+). Residues 688–713 form a helical membrane-spanning segment; the sequence is MYAYVVYRIALSIHLEIFLGLWIAIL. At 714 to 720 the chain is on the extracellular side; it reads NRSLNIE. The helical transmembrane segment at 721 to 738 threads the bilayer; that stretch reads LVVFIAIFADVATLAIAY. Topologically, residues 739–754 are cytoplasmic; sequence DNAPYSQTPVKWNLPK. A helical membrane pass occupies residues 755-779; sequence LWGMSVLLGVVLAVGTWITVTTMYA. At 780-806 the chain is on the extracellular side; the sequence is QGENGGIVQNFGNMDEVLFLQISLTEN. A run of 2 helical transmembrane segments spans residues 807–826 and 827–847; these read WLIFITRANGPFWSSIPSWQ and LSGAIFLVDILATCFTIWGWF. At 848–853 the chain is on the extracellular side; it reads EHSDTS. Residues 854–878 traverse the membrane as a helical segment; it reads IVAVVRIWIFSFGIFCIMGGVYYIL. At 879-920 the chain is on the cytoplasmic side; it reads QDSVGFDNLMHGKSPKGNQKQRSLEDFVVSLQRVSTQHEKSQ.

Belongs to the cation transport ATPase (P-type) (TC 3.A.3) family. Type IIIA subfamily.

It is found in the cell membrane. The catalysed reaction is ATP + H2O + H(+)(in) = ADP + phosphate + 2 H(+)(out). Its function is as follows. The plasma membrane ATPase of plants and fungi is a hydrogen ion pump. The proton gradient it generates drives the active transport of nutrients by H(+)-symport. The resulting external acidification and/or internal alkinization may mediate growth responses. The polypeptide is Plasma membrane ATPase (pma-1) (Neurospora crassa (strain ATCC 24698 / 74-OR23-1A / CBS 708.71 / DSM 1257 / FGSC 987)).